A 236-amino-acid polypeptide reads, in one-letter code: Purine nucleoside phosphorylase DeoD-type 2 (236 aa).

Histidine 5 contributes to the a purine D-ribonucleoside binding site. Phosphate-binding positions include glycine 21, arginine 25, arginine 44, and 88–91 (RVGS). Residues 180–182 (DME) and 204–205 (SD) contribute to the a purine D-ribonucleoside site. Aspartate 205 acts as the Proton donor in catalysis.

This sequence belongs to the PNP/UDP phosphorylase family. As to quaternary structure, homohexamer; trimer of homodimers.

The enzyme catalyses a purine D-ribonucleoside + phosphate = a purine nucleobase + alpha-D-ribose 1-phosphate. It carries out the reaction a purine 2'-deoxy-D-ribonucleoside + phosphate = a purine nucleobase + 2-deoxy-alpha-D-ribose 1-phosphate. Catalyzes the reversible phosphorolytic breakdown of the N-glycosidic bond in the beta-(deoxy)ribonucleoside molecules, with the formation of the corresponding free purine bases and pentose-1-phosphate. This chain is Purine nucleoside phosphorylase DeoD-type 2, found in Vibrio parahaemolyticus serotype O3:K6 (strain RIMD 2210633).